The primary structure comprises 166 residues: Pyruvoyl-dependent arginine decarboxylase (166 aa).

Position 45 is a pyruvic acid (Ser) (Ser-45).

Belongs to the PdaD family. Pyruvate is required as a cofactor.

It carries out the reaction L-arginine + H(+) = agmatine + CO2. This is Pyruvoyl-dependent arginine decarboxylase from Methanocella arvoryzae (strain DSM 22066 / NBRC 105507 / MRE50).